Consider the following 528-residue polypeptide: Probable rhamnogalacturonate lyase A (528 aa).

Positions 1–20 (MFFQTGLLLSLSLWTKVAYA) are cleaved as a signal peptide. 2 cysteine pairs are disulfide-bonded: Cys50–Cys93 and Cys184–Cys193. N-linked (GlcNAc...) asparagine glycosylation is present at Asn56. N-linked (GlcNAc...) asparagine glycosylation is present at Asn351.

This sequence belongs to the polysaccharide lyase 4 family.

The protein localises to the secreted. It catalyses the reaction Endotype eliminative cleavage of L-alpha-rhamnopyranosyl-(1-&gt;4)-alpha-D-galactopyranosyluronic acid bonds of rhamnogalacturonan I domains in ramified hairy regions of pectin leaving L-rhamnopyranose at the reducing end and 4-deoxy-4,5-unsaturated D-galactopyranosyluronic acid at the non-reducing end.. In terms of biological role, pectinolytic enzymes consist of four classes of enzymes: pectin lyase, polygalacturonase, pectin methylesterase and rhamnogalacturonase. Degrades the rhamnogalacturonan I (RG-I) backbone of pectin. Active against linseed rhamnogalacturonan. This chain is Probable rhamnogalacturonate lyase A (rglA), found in Aspergillus clavatus (strain ATCC 1007 / CBS 513.65 / DSM 816 / NCTC 3887 / NRRL 1 / QM 1276 / 107).